The primary structure comprises 785 residues: Disintegrin and metalloproteinase domain-containing protein B (785 aa).

The N-terminal stretch at 1-26 (MRFLKSALPFVASALSLLSVQAAARS) is a signal peptide. The Extracellular segment spans residues 27-703 (QEPSAIQHVS…GSWVEQHKNL (677 aa)). Residues 279 to 507 (KQVALVGIAA…NSVKSSCLSD (229 aa)) enclose the Peptidase M12B domain. N-linked (GlcNAc...) asparagine glycosylation is found at asparagine 322, asparagine 329, and asparagine 355. Cystine bridges form between cysteine 398–cysteine 492 and cysteine 446–cysteine 464. Histidine 429 is a Zn(2+) binding site. The active site involves glutamate 430. Residues histidine 433 and histidine 439 each contribute to the Zn(2+) site. The Disintegrin domain occupies 516–605 (GSQCGNGIVE…TCPADSFKKD (90 aa)). N-linked (GlcNAc...) asparagine glycans are attached at residues asparagine 561, asparagine 593, and asparagine 640. An intrachain disulfide couples cysteine 577 to cysteine 597. The helical transmembrane segment at 704-724 (VIGVACGVGGLLVLSILWCMI) threads the bilayer. Residues 725-785 (NRCRRARTVV…GPYQSATRYA (61 aa)) are Cytoplasmic-facing. A disordered region spans residues 737 to 785 (PPMRPWPGPMPPPPPQMGQWAGPNRGYQGLRAEPPPPYPGPYQSATRYA). Positions 739 to 752 (MRPWPGPMPPPPPQ) are enriched in pro residues.

Zn(2+) serves as cofactor.

The protein resides in the membrane. Its function is as follows. Probable zinc protease. The chain is Disintegrin and metalloproteinase domain-containing protein B (ADM-B) from Aspergillus fumigatus (strain ATCC MYA-4609 / CBS 101355 / FGSC A1100 / Af293) (Neosartorya fumigata).